A 297-amino-acid polypeptide reads, in one-letter code: 4-diphosphocytidyl-2-C-methyl-D-erythritol kinase (297 aa).

Lysine 10 is an active-site residue. 95-105 (PVAGGMAGGSA) lines the ATP pocket. Residue aspartate 137 is part of the active site.

This sequence belongs to the GHMP kinase family. IspE subfamily.

The catalysed reaction is 4-CDP-2-C-methyl-D-erythritol + ATP = 4-CDP-2-C-methyl-D-erythritol 2-phosphate + ADP + H(+). Its pathway is isoprenoid biosynthesis; isopentenyl diphosphate biosynthesis via DXP pathway; isopentenyl diphosphate from 1-deoxy-D-xylulose 5-phosphate: step 3/6. Its function is as follows. Catalyzes the phosphorylation of the position 2 hydroxy group of 4-diphosphocytidyl-2C-methyl-D-erythritol. In Streptomyces avermitilis (strain ATCC 31267 / DSM 46492 / JCM 5070 / NBRC 14893 / NCIMB 12804 / NRRL 8165 / MA-4680), this protein is 4-diphosphocytidyl-2-C-methyl-D-erythritol kinase.